A 740-amino-acid chain; its full sequence is Ribosomal protein S6 kinase alpha-3 (740 aa).

Residues 1–26 (MPLAQLADPWQKMAVESPSDSAENGQ) form a disordered region. Positions 68-327 (FELLKVLGQG…VEEIKRHSFF (260 aa)) constitute a Protein kinase 1 domain. ATP-binding positions include 74–82 (LGQGSFGKV) and lysine 100. Catalysis depends on aspartate 193, which acts as the Proton acceptor. At serine 227 the chain carries Phosphoserine; by PDPK1. The 70-residue stretch at 328–397 (STIDWNKLYR…VAITSDDESQ (70 aa)) folds into the AGC-kinase C-terminal domain. At threonine 365 the chain carries Phosphothreonine. 2 positions are modified to phosphoserine: serine 369 and serine 375. At serine 386 the chain carries Phosphoserine; by autocatalysis and MAPKAPK2. A Phosphoserine modification is found at serine 415. The Protein kinase 2 domain occupies 422–679 (YEVKEDIGVG…AALVLRHPWI (258 aa)). Residues 428–436 (IGVGSYSVC) and lysine 451 contribute to the ATP site. The residue at position 529 (tyrosine 529) is a Phosphotyrosine; by FGFR3. Aspartate 539 acts as the Proton acceptor in catalysis. A phosphoserine mark is found at serine 556 and serine 715.

It belongs to the protein kinase superfamily. AGC Ser/Thr protein kinase family. S6 kinase subfamily. Forms a complex with either MAPK1/ERK2 or MAPK3/ERK1 in quiescent cells. Transiently dissociates following mitogenic stimulation. Interacts with NFATC4, ETV1/ER81 and FGFR1. The cofactor is Mg(2+). Post-translationally, activated by phosphorylation at Ser-227 by PDPK1. Autophosphorylated on Ser-386, as part of the activation process. May be phosphorylated at Thr-365 and Ser-369 by MAPK1/ERK2 and MAPK3/ERK1. Can also be activated via phosphorylation at Ser-386 by MAPKAPK2. N-terminal myristoylation results in an activated kinase in the absence of added growth factors. As to expression, intestine, thymus, lung, heart and brain.

The protein localises to the nucleus. The protein resides in the cytoplasm. The catalysed reaction is L-seryl-[protein] + ATP = O-phospho-L-seryl-[protein] + ADP + H(+). It catalyses the reaction L-threonyl-[protein] + ATP = O-phospho-L-threonyl-[protein] + ADP + H(+). Its activity is regulated as follows. Upon extracellular signal or mitogen stimulation, phosphorylated at Thr-577 in the C-terminal kinase domain (CTKD) by MAPK1/ERK2 and MAPK3/ERK1. The activated CTKD then autophosphorylates Ser-386, allowing binding of PDPK1, which in turn phosphorylates Ser-227 in the N-terminal kinase domain (NTDK) leading to the full activation of the protein and subsequent phosphorylation of the substrates by the NTKD. Its function is as follows. Serine/threonine-protein kinase that acts downstream of ERK (MAPK1/ERK2 and MAPK3/ERK1) signaling and mediates mitogenic and stress-induced activation of the transcription factors CREB1, ETV1/ER81 and NR4A1/NUR77, regulates translation through RPS6 and EIF4B phosphorylation, and mediates cellular proliferation, survival, and differentiation by modulating mTOR signaling and repressing pro-apoptotic function of BAD and DAPK1. In fibroblast, is required for EGF-stimulated phosphorylation of CREB1 and histone H3 at 'Ser-10', which results in the subsequent transcriptional activation of several immediate-early genes. In response to mitogenic stimulation (EGF and PMA), phosphorylates and activates NR4A1/NUR77 and ETV1/ER81 transcription factors and the cofactor CREBBP. Upon insulin-derived signal, acts indirectly on the transcription regulation of several genes by phosphorylating GSK3B at 'Ser-9' and inhibiting its activity. Phosphorylates RPS6 in response to serum or EGF via an mTOR-independent mechanism and promotes translation initiation by facilitating assembly of the preinitiation complex. In response to insulin, phosphorylates EIF4B, enhancing EIF4B affinity for the EIF3 complex and stimulating cap-dependent translation. Is involved in the mTOR nutrient-sensing pathway by directly phosphorylating TSC2 at 'Ser-1798', which potently inhibits TSC2 ability to suppress mTOR signaling, and mediates phosphorylation of RPTOR, which regulates mTORC1 activity and may promote rapamycin-sensitive signaling independently of the PI3K/AKT pathway. Mediates cell survival by phosphorylating the pro-apoptotic proteins BAD and DAPK1 and suppressing their pro-apoptotic function. Promotes the survival of hepatic stellate cells by phosphorylating CEBPB in response to the hepatotoxin carbon tetrachloride (CCl4). Is involved in cell cycle regulation by phosphorylating the CDK inhibitor CDKN1B, which promotes CDKN1B association with 14-3-3 proteins and prevents its translocation to the nucleus and inhibition of G1 progression. In LPS-stimulated dendritic cells, is involved in TLR4-induced macropinocytosis, and in myeloma cells, acts as effector of FGFR3-mediated transformation signaling, after direct phosphorylation at Tyr-529 by FGFR3. Negatively regulates EGF-induced MAPK1/3 phosphorylation via phosphorylation of SOS1. Phosphorylates SOS1 at 'Ser-1134' and 'Ser-1161' that create YWHAB and YWHAE binding sites and which contribute to the negative regulation of MAPK1/3 phosphorylation. Phosphorylates EPHA2 at 'Ser-897', the RPS6KA-EPHA2 signaling pathway controls cell migration. Acts as a regulator of osteoblast differentiation by mediating phosphorylation of ATF4, thereby promoting ATF4 transactivation activity. The polypeptide is Ribosomal protein S6 kinase alpha-3 (Rps6ka3) (Mus musculus (Mouse)).